The chain runs to 260 residues: Neuraminyllactose-binding hemagglutinin (260 aa).

The N-terminal stretch at 1 to 27 (MRANNHFKDFAWKKCLLGASVVALLVG) is a signal peptide. C28 is lipidated: N-palmitoyl cysteine. Residue C28 is the site of S-diacylglycerol cysteine attachment. The segment at 134-139 (KRTIQK) is N-acetyl-neuraminyl-alpha(2,3)-lactose binding motif.

It localises to the cell outer membrane. This chain is Neuraminyllactose-binding hemagglutinin (hpaA), found in Helicobacter pylori (Campylobacter pylori).